The primary structure comprises 123 residues: Small ribosomal subunit protein uS12 (123 aa).

The tract at residues 1-23 (MPTISQLVKKGREKVEKKTKSPA) is disordered. At Asp89 the chain carries 3-methylthioaspartic acid.

This sequence belongs to the universal ribosomal protein uS12 family. Part of the 30S ribosomal subunit. Contacts proteins S8 and S17. May interact with IF1 in the 30S initiation complex.

Its function is as follows. With S4 and S5 plays an important role in translational accuracy. In terms of biological role, interacts with and stabilizes bases of the 16S rRNA that are involved in tRNA selection in the A site and with the mRNA backbone. Located at the interface of the 30S and 50S subunits, it traverses the body of the 30S subunit contacting proteins on the other side and probably holding the rRNA structure together. The combined cluster of proteins S8, S12 and S17 appears to hold together the shoulder and platform of the 30S subunit. This is Small ribosomal subunit protein uS12 from Thermodesulfovibrio yellowstonii (strain ATCC 51303 / DSM 11347 / YP87).